A 62-amino-acid chain; its full sequence is Large ribosomal subunit protein eL24 (62 aa).

Zn(2+) contacts are provided by C6, C9, C32, and C36. A C4-type zinc finger spans residues 6–36 (CSFCGELLEPGTGLLFAKRDGSTYYFCSSKC).

This sequence belongs to the eukaryotic ribosomal protein eL24 family. Part of the 50S ribosomal subunit. Forms a cluster with proteins L3 and L14. Requires Zn(2+) as cofactor.

Binds to the 23S rRNA. The polypeptide is Large ribosomal subunit protein eL24 (Methanococcoides burtonii (strain DSM 6242 / NBRC 107633 / OCM 468 / ACE-M)).